The sequence spans 160 residues: Ribosomal RNA large subunit methyltransferase H (160 aa).

S-adenosyl-L-methionine is bound by residues Gly108 and 127-132 (FGKMTW).

Belongs to the RNA methyltransferase RlmH family. In terms of assembly, homodimer.

It localises to the cytoplasm. It carries out the reaction pseudouridine(1915) in 23S rRNA + S-adenosyl-L-methionine = N(3)-methylpseudouridine(1915) in 23S rRNA + S-adenosyl-L-homocysteine + H(+). Its function is as follows. Specifically methylates the pseudouridine at position 1915 (m3Psi1915) in 23S rRNA. The protein is Ribosomal RNA large subunit methyltransferase H of Beijerinckia indica subsp. indica (strain ATCC 9039 / DSM 1715 / NCIMB 8712).